The primary structure comprises 148 residues: uncharacterized protein (148 aa).

The N-acetyltransferase domain maps to 7–148; the sequence is LEINYKTDEL…HDVLLWKPIR (142 aa).

This is an uncharacterized protein from Staphylococcus aureus (strain Mu50 / ATCC 700699).